Reading from the N-terminus, the 551-residue chain is GMP synthase [glutamine-hydrolyzing] (551 aa).

The region spanning 40 to 233 (KILIVDFGSQ…VRKIAGLTGD (194 aa)) is the Glutamine amidotransferase type-1 domain. Cysteine 117 (nucleophile) is an active-site residue. Residues histidine 207 and glutamate 209 contribute to the active site. One can recognise a GMPS ATP-PPase domain in the interval 234–426 (WTMRAFREEE…LGLPEIFVGR (193 aa)). Residue 261 to 267 (SGGVDSA) participates in ATP binding.

As to quaternary structure, homodimer.

It catalyses the reaction XMP + L-glutamine + ATP + H2O = GMP + L-glutamate + AMP + diphosphate + 2 H(+). The protein operates within purine metabolism; GMP biosynthesis; GMP from XMP (L-Gln route): step 1/1. In terms of biological role, catalyzes the synthesis of GMP from XMP. In Bradyrhizobium diazoefficiens (strain JCM 10833 / BCRC 13528 / IAM 13628 / NBRC 14792 / USDA 110), this protein is GMP synthase [glutamine-hydrolyzing].